Consider the following 251-residue polypeptide: Triosephosphate isomerase (251 aa).

A substrate-binding site is contributed by 12–14; sequence NWK. The active-site Electrophile is the histidine 98. Residue glutamate 168 is the Proton acceptor of the active site. Substrate-binding positions include glycine 174, serine 213, and 234-235; that span reads GG.

Belongs to the triosephosphate isomerase family. In terms of assembly, homodimer.

The protein resides in the cytoplasm. The catalysed reaction is D-glyceraldehyde 3-phosphate = dihydroxyacetone phosphate. The protein operates within carbohydrate biosynthesis; gluconeogenesis. It participates in carbohydrate degradation; glycolysis; D-glyceraldehyde 3-phosphate from glycerone phosphate: step 1/1. In terms of biological role, involved in the gluconeogenesis. Catalyzes stereospecifically the conversion of dihydroxyacetone phosphate (DHAP) to D-glyceraldehyde-3-phosphate (G3P). The protein is Triosephosphate isomerase of Afipia carboxidovorans (strain ATCC 49405 / DSM 1227 / KCTC 32145 / OM5) (Oligotropha carboxidovorans).